A 251-amino-acid polypeptide reads, in one-letter code: uncharacterized protein (251 aa).

The segment at 229-251 (TSTETSPEHQADLKDDNSDISST) is disordered. A compositionally biased stretch (basic and acidic residues) spans 234-245 (SPEHQADLKDDN).

This is an uncharacterized protein from Acanthamoeba polyphaga (Amoeba).